The primary structure comprises 1183 residues: ATP-dependent helicase/nuclease subunit A (1183 aa).

The UvrD-like helicase ATP-binding domain maps to 3–461; the sequence is VQWTDEQQRA…IDLTKNFRSR (459 aa). An ATP-binding site is contributed by 24-31; the sequence is AAAGSGKT. The 297-residue stretch at 473-769 folds into the UvrD-like helicase C-terminal domain; it reads RQVMDEAVGE…RIMTIHQSKG (297 aa).

It belongs to the helicase family. AddA subfamily. As to quaternary structure, heterodimer of AddA and AddB/RexB. Requires Mg(2+) as cofactor.

The catalysed reaction is Couples ATP hydrolysis with the unwinding of duplex DNA by translocating in the 3'-5' direction.. It catalyses the reaction ATP + H2O = ADP + phosphate + H(+). The heterodimer acts as both an ATP-dependent DNA helicase and an ATP-dependent, dual-direction single-stranded exonuclease. Recognizes the chi site generating a DNA molecule suitable for the initiation of homologous recombination. The AddA nuclease domain is required for chi fragment generation; this subunit has the helicase and 3' -&gt; 5' nuclease activities. This Exiguobacterium sibiricum (strain DSM 17290 / CCUG 55495 / CIP 109462 / JCM 13490 / 255-15) protein is ATP-dependent helicase/nuclease subunit A.